Here is a 75-residue protein sequence, read N- to C-terminus: Exodeoxyribonuclease 7 small subunit (75 aa).

It belongs to the XseB family. In terms of assembly, heterooligomer composed of large and small subunits.

The protein localises to the cytoplasm. It carries out the reaction Exonucleolytic cleavage in either 5'- to 3'- or 3'- to 5'-direction to yield nucleoside 5'-phosphates.. Bidirectionally degrades single-stranded DNA into large acid-insoluble oligonucleotides, which are then degraded further into small acid-soluble oligonucleotides. This Chlamydia pneumoniae (Chlamydophila pneumoniae) protein is Exodeoxyribonuclease 7 small subunit.